The sequence spans 684 residues: MENGCTSHWLLSRIAGSESRLANNRAFRCGSIEKAASYLIGELLIINQAEAKSNKRLPKFVHKADTYHKACARCKARGKTCAYGQGAVEKQTVHKPRGQASSVHMPVPMLVPPISSAPSLETPPESVAASPPTVDSIPVSHHVNEDPEAEPDLEKNRAYYTAHGRFAGQVAAAINERAGLIPATCNQVPLVDAPLFGDLNLPSQSCALSSSTELPPRAYADQLIDIYWQHVDPMEPVLDRQRFLENYEKAYSTPITPLCADYDLWLGILNVVFALAVQRQELNPLHQRNEEANRFFQRAWVLLPAESMLWKPGSLELVQCLMLMNRYLHCTNNQQKTWTTAGLAMRIAQSMCCHLTETPLLKGSSDDKALKQKVWASCVALDRCISWSLGKTSALVLIPSPPPSSPQQLGENAMHDTLGLRLHEIGNQIQLAQIQNRTSLAARFRPPLLSQQDEYHNAALQLDACLQDWENSIPSDWQPRNLRMVTDRSSRAERYLLHLRYLHHRIFLYRPMLARFYAMKPDTQPLHKSPSLSHRLLRESASMCIEAAQQVASLVNETLEPDEPIGLLPWWYRIYYLHIAGANFLAAMFRSELFTDSVSQSWESVMLALRAHEHLSPYVQQCLWTFETLAARITGKPYPSMDGGGCGLMVDGSSGVSFDDIFKDINFDFDNFIFGPEDFGEGLV.

Positions 114–151 (ISSAPSLETPPESVAASPPTVDSIPVSHHVNEDPEAEP) are disordered.

It localises to the nucleus. Functionally, transcription factor that acts in concert with sorR1 which is a transcriptional activator of the gene cluster that mediates the biosynthesis of sorbicillinoids, a diverse group of yellow secondary metabolites that restrict growth of competing pathogenic fungi but not of bacteria. In Penicillium rubens (strain ATCC 28089 / DSM 1075 / NRRL 1951 / Wisconsin 54-1255) (Penicillium chrysogenum), this protein is Sorbicillinoid biosynthetic cluster transcription factor 2.